A 114-amino-acid chain; its full sequence is Gamma-glutamylcyclotransferase family protein ytfP (114 aa).

The protein belongs to the gamma-glutamylcyclotransferase family.

The protein localises to the cytoplasm. In terms of biological role, may play a role in antibiotic biosynthesis. The sequence is that of Gamma-glutamylcyclotransferase family protein ytfP (ytfP) from Citrobacter rodentium (strain ICC168) (Citrobacter freundii biotype 4280).